The primary structure comprises 816 residues: Sucrose synthase 2 (816 aa).

The tract at residues 280 to 757 (MVLNVVILSP…GLQRIEEKYT (478 aa)) is GT-B glycosyltransferase.

It belongs to the glycosyltransferase 1 family. Plant sucrose synthase subfamily. In terms of assembly, forms homotetramers and heterotetramers with SS1, all three possible heterotetramers are formed. Abundant in developing endosperm, low in aleurone, and undetected in coleoptiles and roots. Also detected in crude extracts of anthers and in immature embryos.

The catalysed reaction is an NDP-alpha-D-glucose + D-fructose = a ribonucleoside 5'-diphosphate + sucrose + H(+). Functionally, sucrose-cleaving enzyme that provides UDP-glucose and fructose for various metabolic pathways. The sequence is that of Sucrose synthase 2 (SS2) from Hordeum vulgare (Barley).